The sequence spans 366 residues: Caffeic acid 3-O-methyltransferase (366 aa).

Position 131–137 (131–137 (MNQDKIL)) interacts with substrate. A substrate binding region spans residues 163–181 (AFEYHGTDPRFNKIFNRGM). S-adenosyl-L-methionine-binding residues include glycine 209, aspartate 232, aspartate 252, methionine 253, and lysine 266. Histidine 270 acts as the Proton acceptor in catalysis.

It belongs to the class I-like SAM-binding methyltransferase superfamily. Cation-independent O-methyltransferase family. COMT subfamily. In terms of assembly, homodimer.

The catalysed reaction is (E)-caffeate + S-adenosyl-L-methionine = (E)-ferulate + S-adenosyl-L-homocysteine + H(+). Its pathway is aromatic compound metabolism; phenylpropanoid biosynthesis. In terms of biological role, catalyzes the conversion of caffeic acid to ferulic acid and of 5-hydroxyferulic acid to sinapic acid. The resulting products may subsequently be converted to the corresponding alcohols that are incorporated into lignins. The polypeptide is Caffeic acid 3-O-methyltransferase (OMT) (Eucalyptus gunnii (Cider gum)).